Reading from the N-terminus, the 204-residue chain is Histone chaperone ASF1A (204 aa).

Residues 1 to 156 (MAKVQVNNVV…TRFHINWEDN (156 aa)) form an interaction with histone H3, CHAF1B, and HIRA region. Positions 31–37 (IEDLSED) match the Required for interaction with HIRA motif. Residues 155-204 (DNTEKLEDAESSNPNLPSLLSTDALPSASKGWSTSENSLNVMLESHMDCM) are required for interaction with HIRA. Serine 192 carries the phosphoserine; by TLK2 modification.

This sequence belongs to the ASF1 family. As to quaternary structure, interacts with histone H3 (via C-terminus), including histone H3.1, H3.2 and H3.3, and histone H4; the interaction with H3 is direct. Probably interacts with the heterodimeric form of H3-H4 taking the place of the second dimer. Interacts with the CHAF1A, CHAF1B and RBBP4 subunits of the CAF-1 complex. Interacts with CABIN1, HAT1, HIRA, NASP, TAF1 and UBN1. Found in a soluble complex with NASP and histones H3 and H4; the interaction with NASP is probably indirect and mediated by H3-H4. Interacts with CDAN1. Found in a cytosolic complex with IPO4 and histones H3 and H4. Interacts with CREBBP. In terms of processing, phosphorylated by TLK1 and TLK2. Highly phosphorylated in S-phase and at lower levels in M-phase. TLK2-mediated phosphorylation at Ser-192 prevents proteasome-dependent degradation.

The protein resides in the nucleus. Histone chaperone that facilitates histone deposition and histone exchange and removal during nucleosome assembly and disassembly. Cooperates with chromatin assembly factor 1 (CAF-1) to promote replication-dependent chromatin assembly and with HIRA to promote replication-independent chromatin assembly. Promotes homologous recombination-mediated repair of double-strand breaks (DSBs) at stalled or collapsed replication forks: acts by mediating histone replacement at DSBs, leading to recruitment of the MMS22L-TONSL complex and subsequent loading of RAD51. Also involved in the nuclear import of the histone H3-H4 dimer together with importin-4 (IPO4): specifically recognizes and binds newly synthesized histones with the monomethylation of H3 'Lys-9' and acetylation at 'Lys-14' (H3K9me1K14ac) marks, and diacetylation at 'Lys-5' and 'Lys-12' of H4 (H4K5K12ac) marks in the cytosol. Required for the formation of senescence-associated heterochromatin foci (SAHF) and efficient senescence-associated cell cycle exit. The polypeptide is Histone chaperone ASF1A (ASF1A) (Bos taurus (Bovine)).